Consider the following 622-residue polypeptide: Polygalacturonase 1 beta-like protein 1 (622 aa).

Positions 1-21 (MRKQFVFLLPFLSRLYHVVIA) are cleaved as a signal peptide. An FXXY 1 repeat occupies 118-121 (FSVY). Asn125 carries an N-linked (GlcNAc...) asparagine glycan. FXXY repeat units follow at residues 126–129 (FTNY), 140–143 (FKKY), 154–157 (FRRY), 168–171 (FTGY), 182–185 (FNSY), 196–199 (FKNY), 210–213 (FKAY), 224–227 (FKTY), 239–242 (FTSY), 253–256 (FSSY), and 267–270 (FSNY). A glycan (N-linked (GlcNAc...) asparagine) is linked at Asn278. 7 FXXY repeats span residues 281–284 (FKGY), 295–298 (FKSY), 309–312 (FLNY), 323–326 (FSSY), 337–340 (FVNY), 351–354 (FSGY), and 365–368 (FKTY). N-linked (GlcNAc...) asparagine glycosylation is present at Asn371. 2 FXXY repeats span residues 374–377 (FKDY) and 384–387 (FAKY). Residues Asn388 and Asn461 are each glycosylated (N-linked (GlcNAc...) asparagine). The BURP domain maps to 407-621 (FFRESMLKEG…FENDMNWAIA (215 aa)).

Expressed in flowers and stems.

The protein resides in the secreted. It localises to the extracellular space. It is found in the apoplast. The protein localises to the cell wall. Its function is as follows. Involved in cell size determination. This Arabidopsis thaliana (Mouse-ear cress) protein is Polygalacturonase 1 beta-like protein 1.